Reading from the N-terminus, the 120-residue chain is U-scoloptoxin(20)-Cw1a (120 aa).

The first 26 residues, 1–26 (MNSTDRLLGVLLAVVALILLIRISEA), serve as a signal peptide directing secretion. Residues 87 to 106 (SSGKSLTTTKDSSESRKKEI) are disordered. Over residues 97 to 106 (DSSESRKKEI) the composition is skewed to basic and acidic residues.

It belongs to the scoloptoxin-20 family. Contains 3 disulfide bonds. Expressed by the venom gland.

It is found in the secreted. The chain is U-scoloptoxin(20)-Cw1a from Cormocephalus westwoodi (Westwood's green centipede).